The primary structure comprises 103 residues: N(4)-acetylcytidine amidohydrolase (103 aa).

Positions 7 to 93 constitute an ASCH domain; that stretch reads TFFERFEQDI…VIAEIYPGLE (87 aa). Lys-21 acts as the Proton acceptor in catalysis. Thr-24 serves as the catalytic Nucleophile. The active-site Proton donor is the Glu-74.

This sequence belongs to the N(4)-acetylcytidine amidohydrolase family.

The enzyme catalyses N(4)-acetylcytidine + H2O = cytidine + acetate + H(+). It catalyses the reaction N(4)-acetyl-2'-deoxycytidine + H2O = 2'-deoxycytidine + acetate + H(+). It carries out the reaction N(4)-acetylcytosine + H2O = cytosine + acetate + H(+). Functionally, catalyzes the hydrolysis of N(4)-acetylcytidine (ac4C). The chain is N(4)-acetylcytidine amidohydrolase from Shewanella putrefaciens (strain CN-32 / ATCC BAA-453).